A 619-amino-acid polypeptide reads, in one-letter code: ETS-related transcription factor Elf-1 (619 aa).

Phosphoserine is present on residues S110, S163, S167, and S168. The tract at residues 158 to 199 (EKYADSPGASSPEQPKRKKGRKTKPPRPDSPATTPNISVKKK) is disordered. A compositionally biased stretch (basic residues) spans 173–182 (KRKKGRKTKP). S187 carries the post-translational modification Phosphoserine. The residue at position 190 (T190) is a Phosphothreonine. Residues 208–290 (IYLWEFLLAL…EGQRLVYQFK (83 aa)) constitute a DNA-binding region (ETS). Positions 300 to 366 (NDEDPSSSIE…DPVEVAQPSE (67 aa)) are disordered. Positions 305–321 (SSSIESSDPSLSSSATS) are enriched in low complexity. Polar residues predominate over residues 322–335 (NRNQTSRSRVSSSP). S432 is subject to Phosphoserine. The tract at residues 564–592 (TLTQEVEKKESEDHLKENTEKTEQQPQPY) is disordered. Over residues 568-586 (EVEKKESEDHLKENTEKTE) the composition is skewed to basic and acidic residues.

The protein belongs to the ETS family. In terms of assembly, binds to the underphosphorylated form of RB. May interact with other transcription factors in order to regulate specific genes. Interacts with RUNX1. As to expression, in fetal tissues, it is highly expressed in heart, lung liver and kidney, and weakly expressed in brain. In adult, it is highly expressed in pancreas, spleen, thymus and peripheral blood leukocytes, expressed at moderate levels in heart, placenta, lung, liver, skeletal muscle, kidney, prostate, ovary, small intestine and colon, and weakly expressed in brain and testis.

It is found in the nucleus. Its function is as follows. Transcription factor that activates the LYN and BLK promoters. Appears to be required for the T-cell-receptor-mediated trans activation of HIV-2 gene expression. Binds specifically to two purine-rich motifs in the HIV-2 enhancer. In Homo sapiens (Human), this protein is ETS-related transcription factor Elf-1 (ELF1).